Reading from the N-terminus, the 233-residue chain is Transcriptional regulatory protein NatR (233 aa).

Positions 3-117 (KVGLVDDYRV…RLAASFDRYL (115 aa)) constitute a Response regulatory domain. Position 54 is a 4-aspartylphosphate (D54). An HTH LytTR-type domain is found at 129–233 (ILIKQKSEMH…QLDYFQNYYF (105 aa)).

In terms of processing, phosphorylated by NatK.

Its subcellular location is the cytoplasm. Its function is as follows. Member of the two-component regulatory system NatK/NatR that positively regulates the expression of the natAB operon. Acts by binding directly to the promoter of natAB. The chain is Transcriptional regulatory protein NatR from Bacillus subtilis (strain 168).